The following is a 169-amino-acid chain: Shikimate kinase (169 aa).

Residue 12-17 (AVGKTT) coordinates ATP. Threonine 16 serves as a coordination point for Mg(2+). Substrate-binding residues include aspartate 34, arginine 58, and glycine 80. Arginine 119 contributes to the ATP binding site. A substrate-binding site is contributed by arginine 139. Arginine 156 is an ATP binding site.

It belongs to the shikimate kinase family. Monomer. It depends on Mg(2+) as a cofactor.

Its subcellular location is the cytoplasm. The catalysed reaction is shikimate + ATP = 3-phosphoshikimate + ADP + H(+). The protein operates within metabolic intermediate biosynthesis; chorismate biosynthesis; chorismate from D-erythrose 4-phosphate and phosphoenolpyruvate: step 5/7. In terms of biological role, catalyzes the specific phosphorylation of the 3-hydroxyl group of shikimic acid using ATP as a cosubstrate. The polypeptide is Shikimate kinase (Alkaliphilus oremlandii (strain OhILAs) (Clostridium oremlandii (strain OhILAs))).